Here is a 94-residue protein sequence, read N- to C-terminus: CRISPR-associated endoribonuclease Cas2 1 (94 aa).

Aspartate 8 is a binding site for Mg(2+).

This sequence belongs to the CRISPR-associated endoribonuclease Cas2 protein family. In terms of assembly, homodimer, forms a heterotetramer with a Cas1 homodimer. It depends on Mg(2+) as a cofactor.

Its function is as follows. CRISPR (clustered regularly interspaced short palindromic repeat), is an adaptive immune system that provides protection against mobile genetic elements (viruses, transposable elements and conjugative plasmids). CRISPR clusters contain sequences complementary to antecedent mobile elements and target invading nucleic acids. CRISPR clusters are transcribed and processed into CRISPR RNA (crRNA). Functions as a ssRNA-specific endoribonuclease. Involved in the integration of spacer DNA into the CRISPR cassette. The chain is CRISPR-associated endoribonuclease Cas2 1 from Synechocystis sp. (strain ATCC 27184 / PCC 6803 / Kazusa).